We begin with the raw amino-acid sequence, 248 residues long: Type III pantothenate kinase (248 aa).

Residue 6-13 (ELGNSQLK) coordinates ATP. Substrate is bound by residues tyrosine 94 and 101–104 (GVDR). Residue aspartate 103 is the Proton acceptor of the active site. Residue aspartate 123 coordinates K(+). Threonine 126 serves as a coordination point for ATP. Threonine 179 lines the substrate pocket.

Belongs to the type III pantothenate kinase family. In terms of assembly, homodimer. It depends on NH4(+) as a cofactor. K(+) is required as a cofactor.

It localises to the cytoplasm. It catalyses the reaction (R)-pantothenate + ATP = (R)-4'-phosphopantothenate + ADP + H(+). Its pathway is cofactor biosynthesis; coenzyme A biosynthesis; CoA from (R)-pantothenate: step 1/5. Functionally, catalyzes the phosphorylation of pantothenate (Pan), the first step in CoA biosynthesis. This is Type III pantothenate kinase from Hydrogenovibrio crunogenus (strain DSM 25203 / XCL-2) (Thiomicrospira crunogena).